Consider the following 812-residue polypeptide: DNA replication licensing factor MCM3 (812 aa).

Ala-2 carries the N-acetylalanine modification. Ser-160 bears the Phosphoserine mark. Lys-293 is subject to N6-acetyllysine. Residues 295–502 (VFEQLARSLA…QDREISDHVL (208 aa)) form the MCM domain. ADP contacts are provided by Gln-353, Leu-393, Glu-394, Ala-395, and Ala-397. Positions 477 to 480 (SRFD) match the Arginine finger motif. Residue Lys-547 is modified to N6-acetyllysine. Ser-611 is modified (phosphoserine). ATP is bound at residue Arg-664. The segment at 664–744 (RKKASEDESD…TQDSQKVELS (81 aa)) is disordered. A phosphoserine mark is found at Ser-668, Ser-672, and Ser-681. Residues 670 to 681 (DESDLEDEEEKS) show a composition bias toward acidic residues. Position 705 is a phosphotyrosine (Tyr-705). Phosphoserine is present on Ser-708. 3 positions are modified to phosphothreonine: Thr-719, Thr-722, and Thr-729. Basic and acidic residues predominate over residues 720–744 (PKTDDSQEKTDDSQETQDSQKVELS). Phosphoserine occurs at positions 732 and 738.

The protein belongs to the MCM family. Component of the MCM2-7 complex. The complex forms a toroidal hexameric ring with the proposed subunit order MCM2-MCM6-MCM4-MCM7-MCM3-MCM5. Component of the CMG helicase complex, a hexameric ring of related MCM2-7 subunits stabilized by CDC45 and the tetrameric GINS complex. Associated with the replication-specific DNA polymerase alpha. Interacts with MCMBP. Interacts with ANKRD17. Interacts with MCM3AP; this interaction leads to MCM3 acetylation. Post-translationally, acetylated by MCM3AP. O-glycosylated (O-GlcNAcylated), in a cell cycle-dependent manner.

It is found in the nucleus. The protein resides in the chromosome. It catalyses the reaction ATP + H2O = ADP + phosphate + H(+). Functionally, acts as a component of the MCM2-7 complex (MCM complex) which is the replicative helicase essential for 'once per cell cycle' DNA replication initiation and elongation in eukaryotic cells. Core component of CDC45-MCM-GINS (CMG) helicase, the molecular machine that unwinds template DNA during replication, and around which the replisome is built. The active ATPase sites in the MCM2-7 ring are formed through the interaction surfaces of two neighboring subunits such that a critical structure of a conserved arginine finger motif is provided in trans relative to the ATP-binding site of the Walker A box of the adjacent subunit. The six ATPase active sites, however, are likely to contribute differentially to the complex helicase activity. Required for the entry in S phase and for cell division. The sequence is that of DNA replication licensing factor MCM3 (Mcm3) from Mus musculus (Mouse).